The following is a 493-amino-acid chain: Anthranilate synthase component 1 (493 aa).

Residues Ser-48 and 273 to 275 (PYM) each bind L-tryptophan. 308-309 (GT) contributes to the chorismate binding site. Residue Glu-335 participates in Mg(2+) binding. Chorismate contacts are provided by residues Tyr-423, Arg-443, 457–459 (GGG), and Gly-459. Glu-472 is a Mg(2+) binding site.

Belongs to the anthranilate synthase component I family. Heterotetramer consisting of two non-identical subunits: a beta subunit (TrpG) and a large alpha subunit (TrpE). Requires Mg(2+) as cofactor.

It catalyses the reaction chorismate + L-glutamine = anthranilate + pyruvate + L-glutamate + H(+). Its pathway is amino-acid biosynthesis; L-tryptophan biosynthesis; L-tryptophan from chorismate: step 1/5. Its activity is regulated as follows. Feedback inhibited by tryptophan. Functionally, part of a heterotetrameric complex that catalyzes the two-step biosynthesis of anthranilate, an intermediate in the biosynthesis of L-tryptophan. In the first step, the glutamine-binding beta subunit (TrpG) of anthranilate synthase (AS) provides the glutamine amidotransferase activity which generates ammonia as a substrate that, along with chorismate, is used in the second step, catalyzed by the large alpha subunit of AS (TrpE) to produce anthranilate. In the absence of TrpG, TrpE can synthesize anthranilate directly from chorismate and high concentrations of ammonia. This Pseudomonas putida (Arthrobacter siderocapsulatus) protein is Anthranilate synthase component 1 (trpE).